The following is a 360-amino-acid chain: Phenylalanine--tRNA ligase alpha subunit (360 aa).

Mg(2+) is bound at residue E260.

The protein belongs to the class-II aminoacyl-tRNA synthetase family. Phe-tRNA synthetase alpha subunit type 1 subfamily. Tetramer of two alpha and two beta subunits. The cofactor is Mg(2+).

Its subcellular location is the cytoplasm. It catalyses the reaction tRNA(Phe) + L-phenylalanine + ATP = L-phenylalanyl-tRNA(Phe) + AMP + diphosphate + H(+). The polypeptide is Phenylalanine--tRNA ligase alpha subunit (Bartonella tribocorum (strain CIP 105476 / IBS 506)).